The chain runs to 245 residues: Flavin-dependent thymidylate synthase (245 aa).

Residues 5–210 enclose the ThyX domain; it reads IKVRLVNYTK…ELRPIIRWAK (206 aa). FAD-binding positions include Ser59, 83-85, and Gln91; that span reads RHR. Residues 80 to 83, 91 to 95, and Arg149 contribute to the dUMP site; these read QLVR and QQSMR. The ThyX motif signature appears at 83–93; the sequence is RHRIASYTQQS. Residues 165–167 and His171 contribute to the FAD site; that span reads NLR. Arg176 provides a ligand contact to dUMP. Arg176 (involved in ionization of N3 of dUMP, leading to its activation) is an active-site residue.

The protein belongs to the thymidylate synthase ThyX family. As to quaternary structure, homotetramer. FAD is required as a cofactor.

It carries out the reaction dUMP + (6R)-5,10-methylene-5,6,7,8-tetrahydrofolate + NADPH + H(+) = dTMP + (6S)-5,6,7,8-tetrahydrofolate + NADP(+). Its pathway is pyrimidine metabolism; dTTP biosynthesis. Functionally, catalyzes the reductive methylation of 2'-deoxyuridine-5'-monophosphate (dUMP) to 2'-deoxythymidine-5'-monophosphate (dTMP) while utilizing 5,10-methylenetetrahydrofolate (mTHF) as the methyl donor, and NADPH and FADH(2) as the reductant. The chain is Flavin-dependent thymidylate synthase from Thermococcus onnurineus (strain NA1).